Consider the following 292-residue polypeptide: Undecaprenyl-diphosphatase (292 aa).

The next 7 membrane-spanning stretches (helical) occupy residues 1–21, 46–66, 88–108, 114–134, 192–212, 225–245, and 253–273; these read MSLVSAALFGLVQALTEFLPV, FVTIIQAGTTLAVLIYFRADI, ARLGWYILLGTLPAALAGKLL, ALGNWVIAGSLVGLGLVLLAA, FLLSVPITLAAGAYKLWSTVP, VVGTVVSAVAGYLVIDWLLAW, and VFVVWRIAAGAAIAALILSGV.

This sequence belongs to the UppP family.

The protein resides in the cell inner membrane. The catalysed reaction is di-trans,octa-cis-undecaprenyl diphosphate + H2O = di-trans,octa-cis-undecaprenyl phosphate + phosphate + H(+). Its function is as follows. Catalyzes the dephosphorylation of undecaprenyl diphosphate (UPP). Confers resistance to bacitracin. The protein is Undecaprenyl-diphosphatase of Anaeromyxobacter dehalogenans (strain 2CP-C).